Consider the following 480-residue polypeptide: Protein nucleotidyltransferase YdiU (480 aa).

Glycine 87, glycine 89, arginine 90, lysine 110, aspartate 122, glycine 123, arginine 173, and arginine 180 together coordinate ATP. Residue aspartate 249 is the Proton acceptor of the active site. The Mg(2+) site is built by asparagine 250 and aspartate 259. Residue aspartate 259 participates in ATP binding.

The protein belongs to the SELO family. Requires Mg(2+) as cofactor. Mn(2+) serves as cofactor.

The enzyme catalyses L-seryl-[protein] + ATP = 3-O-(5'-adenylyl)-L-seryl-[protein] + diphosphate. The catalysed reaction is L-threonyl-[protein] + ATP = 3-O-(5'-adenylyl)-L-threonyl-[protein] + diphosphate. It carries out the reaction L-tyrosyl-[protein] + ATP = O-(5'-adenylyl)-L-tyrosyl-[protein] + diphosphate. It catalyses the reaction L-histidyl-[protein] + UTP = N(tele)-(5'-uridylyl)-L-histidyl-[protein] + diphosphate. The enzyme catalyses L-seryl-[protein] + UTP = O-(5'-uridylyl)-L-seryl-[protein] + diphosphate. The catalysed reaction is L-tyrosyl-[protein] + UTP = O-(5'-uridylyl)-L-tyrosyl-[protein] + diphosphate. Its function is as follows. Nucleotidyltransferase involved in the post-translational modification of proteins. It can catalyze the addition of adenosine monophosphate (AMP) or uridine monophosphate (UMP) to a protein, resulting in modifications known as AMPylation and UMPylation. The chain is Protein nucleotidyltransferase YdiU from Anoxybacillus flavithermus (strain DSM 21510 / WK1).